Here is a 73-residue protein sequence, read N- to C-terminus: Cx9C motif-containing protein 4, mitochondrial (73 aa).

The CHCH domain maps to 2-44 (SNPCQKEACAIQDCLLSHQYDDAKCAKVIDQLYICCSKFYNDN). 2 consecutive short sequence motifs (cx9C motif) follow at residues 5–15 (CQKEACAIQDC) and 26–36 (CAKVIDQLYIC). 2 disulfides stabilise this stretch: Cys5–Cys36 and Cys15–Cys26.

It belongs to the CMC4 family.

The protein resides in the mitochondrion intermembrane space. The protein is Cx9C motif-containing protein 4, mitochondrial (CMC4) of Saccharomyces cerevisiae (strain ATCC 204508 / S288c) (Baker's yeast).